We begin with the raw amino-acid sequence, 326 residues long: tRNA-modifying protein YgfZ (326 aa).

Residues Trp27 and Trp189 each coordinate folate.

It belongs to the tRNA-modifying YgfZ family.

The protein localises to the cytoplasm. Folate-binding protein involved in regulating the level of ATP-DnaA and in the modification of some tRNAs. It is probably a key factor in regulatory networks that act via tRNA modification, such as initiation of chromosomal replication. The protein is tRNA-modifying protein YgfZ of Escherichia coli O157:H7 (strain EC4115 / EHEC).